A 246-amino-acid chain; its full sequence is 1-(5-phosphoribosyl)-5-[(5-phosphoribosylamino)methylideneamino] imidazole-4-carboxamide isomerase (246 aa).

Asp-10 serves as the catalytic Proton acceptor. The active-site Proton donor is the Asp-135.

Belongs to the HisA/HisF family.

It is found in the cytoplasm. It carries out the reaction 1-(5-phospho-beta-D-ribosyl)-5-[(5-phospho-beta-D-ribosylamino)methylideneamino]imidazole-4-carboxamide = 5-[(5-phospho-1-deoxy-D-ribulos-1-ylimino)methylamino]-1-(5-phospho-beta-D-ribosyl)imidazole-4-carboxamide. Its pathway is amino-acid biosynthesis; L-histidine biosynthesis; L-histidine from 5-phospho-alpha-D-ribose 1-diphosphate: step 4/9. This Methanococcoides burtonii (strain DSM 6242 / NBRC 107633 / OCM 468 / ACE-M) protein is 1-(5-phosphoribosyl)-5-[(5-phosphoribosylamino)methylideneamino] imidazole-4-carboxamide isomerase.